A 1321-amino-acid chain; its full sequence is MSLVFAINGQRFELELSSVDPSTTLLEFLRYQTSFKSVKLSCGEGGCGACVVLLSKFDPVLQKVEDFTVSSCLTLLCSVNHCNITTSEGLGNSRDGFHPIHKRLSGFHASQCGFCTPGMSVSLFSALLDADKSQYSDLTVVEAEKAVSGNLCRCTGYRPIVDACKSFASDVDIEDLGLNSFCRKGDKDSSSLTRFDSEKRICTFPEFLKDEIKSVDSGMYRWCSPASVEELSSLLEACKANSNTVSMKLVAGNTSMGYYKDEREQNYDKYIDITRIPHLKEIRENQNGVEIGSVVTISKVIAALKEIRVSPGVEKIFGKLATHMEMIAARFIRNFGSIGGNLVMAQRKQFPSDMATILLAAGAFVNIMSSSRGLEKLTLEEFLERSPLEAHDLVLSIEIPFWHSETNSELFFETYRAAPRPHGSALAYLNAAFLAEVKDTMVVNCRLAFGAYGTKHAIRCKEIEEFLSGKVITDKVLYEAITLLGNVVVPEDGTSNPAYRSSLAPGFLFKFLHTLMTHPTTDKPSNGYHLDPPKPLPMLSSSQNVPINNEYNPVGQPVTKVGASLQASGEAVYVDDIPSPTNCLYGAFIYSKKPFARIKGIHFKDDLVPTGVVAVISRKDVPKGGKNIGMKIGLGSDQLFAEDFTTSVGECIAFVVADTQRHADAAVNLAVVEYETEDLEPPILSVEDAVKKSSLFDIIPFLYPQQVGDTSKGMAEADHQILSSEIRLGSQYVFYMETQTALAVGDEDNCIVVYSSTQTPQYVQSSVAACLGIPENNIRVITRRVGGGFGGKSVKSMPVATACALAAKKLQRPVRTYVNRKTDMIMTGGRHPMKITYSVGFKSTGKITALELEILIDAGASYGFSMFIPSNLIGSLKKYNWGALSFDIKLCKTNLLSRAIMRSPGDVQGTYIAEAIIENIASSLSLEVDTIRKINLHTHESLALFYKDGAGEPHEYTLSSMWDKVGVSSKFEERVSVVREFNESNMWRKRGISRVPIIYEVLLFATPGRVSVLSDGTIVVEIGGIELGQGLWTKVKQMTSYALGMLQCDGTEELLEKIRVIQSDSLSMVQGNFTGGSTTSEGSCAAVRLCCETLVERLKPLMERSDGPITWNELISQAYAQSVNLSASDLYTPKDTPMQYLNYGTAVSEVEVDLVTGQTTVLQTDILYDCGKSLNPAVDLGQIEGSFVQGLGFFMLEEYIEDPEGLLLTDSTWTYKIPTVDTIPKQFNVEILNGGCHEKRVLSSKASGEPPLLLAASVHCATRQAVKEARKQLCMWKGENGSSGSAFQLPVPATMPVVKELCGLDIIESYLEWKLHDNSNL.

The 90-residue stretch at 1–90 (MSLVFAINGQ…HCNITTSEGL (90 aa)) folds into the 2Fe-2S ferredoxin-type domain. [2Fe-2S] cluster-binding residues include cysteine 42, cysteine 47, and cysteine 50. Residues 215-404 (VDSGMYRWCS…LSIEIPFWHS (190 aa)) form the FAD-binding PCMH-type domain.

Belongs to the xanthine dehydrogenase family. Aldehyde oxidases (AO) are homodimers and heterodimers of AO subunits. AO-beta is a AAO1-AAO2 heterodimer; AO-gamma is a AAO2 homodimer. AAO2 also forms a dimer with AAO3. [2Fe-2S] cluster serves as cofactor. Requires FAD as cofactor. It depends on Mo-molybdopterin as a cofactor. In terms of tissue distribution, weakly expressed in roots, leaves and seedlings. In seedlings, mostly expressed in lower part of hypocotyls. Detectable in seeds and mature siliques at low levels.

It is found in the cytoplasm. It carries out the reaction indole-3-acetaldehyde + O2 + H2O = (indol-3-yl)acetate + H2O2 + H(+). Its activity is regulated as follows. Strongly inhibited by iodoacetate, potassium cyanide (KCN), 2-mercaptoethanol, dithiothreitol (DTT), p-chloromercuribenzoate, menadione and estradiol. Weakly inhibited by 4'-(9-acridinylamino)methanesulfon-m-anisidine (mAMSA) and tritonX-100. Not affected by allopurinol. Its function is as follows. In higher plant aldehyde oxidases (AO) appear to be homo- and heterodimeric assemblies of AO subunits with probably different physiological functions. In vitro, AO-gamma uses heptaldehyde, benzaldehyde, naphthaldehyde and cinnamaldehyde as substrates; AO-beta uses indole-3-acetaldehyde (IAAld), indole-3-aldehyde (IAld) and naphtaldehyde; the AAO2-AAO3 dimer uses abscisic aldehyde. The protein is Indole-3-acetaldehyde oxidase (AAO2) of Arabidopsis thaliana (Mouse-ear cress).